The chain runs to 427 residues: Glutamate-1-semialdehyde 2,1-aminomutase (427 aa).

Lys267 bears the N6-(pyridoxal phosphate)lysine mark.

The protein belongs to the class-III pyridoxal-phosphate-dependent aminotransferase family. HemL subfamily. As to quaternary structure, homodimer. Pyridoxal 5'-phosphate is required as a cofactor.

The protein resides in the cytoplasm. It catalyses the reaction (S)-4-amino-5-oxopentanoate = 5-aminolevulinate. It participates in porphyrin-containing compound metabolism; protoporphyrin-IX biosynthesis; 5-aminolevulinate from L-glutamyl-tRNA(Glu): step 2/2. In Thermodesulfovibrio yellowstonii (strain ATCC 51303 / DSM 11347 / YP87), this protein is Glutamate-1-semialdehyde 2,1-aminomutase.